The sequence spans 199 residues: Protein-methionine-sulfoxide reductase heme-binding subunit MsrQ (199 aa).

Helical transmembrane passes span 13–33 (VLLH…VDQG), 79–99 (LLGL…ALLE), 120–140 (LGII…QIMM), 147–167 (WQKL…HYLW), and 169–189 (VKTL…LLLL).

It belongs to the MsrQ family. As to quaternary structure, heterodimer of a catalytic subunit (MsrP) and a heme-binding subunit (MsrQ). It depends on FMN as a cofactor. The cofactor is heme b.

The protein resides in the cell inner membrane. In terms of biological role, part of the MsrPQ system that repairs oxidized periplasmic proteins containing methionine sulfoxide residues (Met-O), using respiratory chain electrons. Thus protects these proteins from oxidative-stress damage caused by reactive species of oxygen and chlorine generated by the host defense mechanisms. MsrPQ is essential for the maintenance of envelope integrity under bleach stress, rescuing a wide series of structurally unrelated periplasmic proteins from methionine oxidation. MsrQ provides electrons for reduction to the reductase catalytic subunit MsrP, using the quinone pool of the respiratory chain. This is Protein-methionine-sulfoxide reductase heme-binding subunit MsrQ from Pectobacterium atrosepticum (strain SCRI 1043 / ATCC BAA-672) (Erwinia carotovora subsp. atroseptica).